A 776-amino-acid chain; its full sequence is Lysyl oxidase homolog 2 (776 aa).

The signal sequence occupies residues 1–25 (MEIPFGSCLYSCLALLVLLPSLSLA). 4 consecutive SRCR domains span residues 61-162 (VRLA…VVCS), 191-305 (IRPI…VSCV), 329-428 (VRLR…VRCN), and 438-546 (VRLN…VACS). Intrachain disulfides connect cysteine 87–cysteine 151, cysteine 100–cysteine 161, cysteine 131–cysteine 141, cysteine 221–cysteine 294, cysteine 234–cysteine 304, cysteine 268–cysteine 278, cysteine 354–cysteine 417, cysteine 367–cysteine 427, and cysteine 398–cysteine 408. The N-linked (GlcNAc...) asparagine glycan is linked to asparagine 267. Asparagine 291 carries an N-linked (GlcNAc...) asparagine glycan. Residue asparagine 458 is glycosylated (N-linked (GlcNAc...) asparagine). 3 disulfides stabilise this stretch: cysteine 467–cysteine 532, cysteine 480–cysteine 545, and cysteine 514–cysteine 524. Positions 550–753 (PDLVLNAEIV…WMYNCHVGGA (204 aa)) are lysyl-oxidase like. Positions 551 and 552 each coordinate Ca(2+). 4 disulfide bridges follow: cysteine 575–cysteine 627, cysteine 581–cysteine 697, cysteine 659–cysteine 675, and cysteine 665–cysteine 687. Residues histidine 628, histidine 630, and histidine 632 each contribute to the Cu cation site. An N-linked (GlcNAc...) asparagine glycan is attached at asparagine 646. A cross-link (lysine tyrosylquinone (Lys-Tyr)) is located at residues 655 to 691 (KASFCLEDTECEGDIQKSYECANFGEQGITMGCWDMY). Tyrosine 691 is subject to 2',4',5'-topaquinone. Glutamate 724, aspartate 726, asparagine 729, and asparagine 730 together coordinate Ca(2+). Cysteine 734 and cysteine 748 are disulfide-bonded.

It belongs to the lysyl oxidase family. As to quaternary structure, component of some chromatin repressor complex. Interacts with SNAI1. Interacts with TAF10. Interacts with HSPA5. Interacts with EFEMP2. It depends on Cu cation as a cofactor. The cofactor is lysine tyrosylquinone residue. In terms of processing, the lysine tyrosylquinone cross-link (LTQ) is generated by condensation of the epsilon-amino group of a lysine with a topaquinone produced by oxidation of tyrosine. Post-translationally, N-glycosylated. N-glycosylation on Asn-458 and Asn-646 may be essential for proper folding and secretion; may be composed of a fucosylated carbohydrates attached to a trimannose N-linked glycan core.

The protein localises to the secreted. It is found in the extracellular space. It localises to the extracellular matrix. The protein resides in the basement membrane. Its subcellular location is the nucleus. The protein localises to the chromosome. It is found in the endoplasmic reticulum. It catalyses the reaction L-lysyl-[protein] + O2 + H2O = (S)-2-amino-6-oxohexanoyl-[protein] + H2O2 + NH4(+). Specifically inhibited by a mouse monoclonal antibody AB0023, inhibition occurs in a non-competitive manner. Mediates the post-translational oxidative deamination of lysine residues on target proteins leading to the formation of deaminated lysine (allysine). Acts as a transcription corepressor and specifically mediates deamination of trimethylated 'Lys-4' of histone H3 (H3K4me3), a specific tag for epigenetic transcriptional activation. Shows no activity against histone H3 when it is trimethylated on 'Lys-9' (H3K9me3) or 'Lys-27' (H3K27me3) or when 'Lys-4' is monomethylated (H3K4me1) or dimethylated (H3K4me2). Also mediates deamination of methylated TAF10, a member of the transcription factor IID (TFIID) complex, which induces release of TAF10 from promoters, leading to inhibition of TFIID-dependent transcription. LOXL2-mediated deamination of TAF10 results in transcriptional repression of genes required for embryonic stem cell pluripotency including POU5F1/OCT4, NANOG, KLF4 and SOX2. Involved in epithelial to mesenchymal transition (EMT) via interaction with SNAI1 and participates in repression of E-cadherin CDH1, probably by mediating deamination of histone H3. During EMT, involved with SNAI1 in negatively regulating pericentromeric heterochromatin transcription. SNAI1 recruits LOXL2 to pericentromeric regions to oxidize histone H3 and repress transcription which leads to release of heterochromatin component CBX5/HP1A, enabling chromatin reorganization and acquisition of mesenchymal traits. Interacts with the endoplasmic reticulum protein HSPA5 which activates the IRE1-XBP1 pathway of the unfolded protein response, leading to expression of several transcription factors involved in EMT and subsequent EMT induction. When secreted into the extracellular matrix, promotes cross-linking of extracellular matrix proteins by mediating oxidative deamination of peptidyl lysine residues in precursors to fibrous collagen and elastin. Acts as a regulator of sprouting angiogenesis, probably via collagen IV scaffolding. Acts as a regulator of chondrocyte differentiation, probably by regulating expression of factors that control chondrocyte differentiation. The chain is Lysyl oxidase homolog 2 (Loxl2) from Rattus norvegicus (Rat).